We begin with the raw amino-acid sequence, 200 residues long: MFLARLTSRLARTVVPWAGFSRSCPGSGVIGSYAFRPLYSLQPASPSRAASLPGKRTQSELEEFLVPRKMAISPLESWLTAQYLLPRRNVEVPVTLAPSQFYECPPRQGEEEAQQGVREAWDATPVQCKNVLKIRRRKMNHHKYRKLVKRTRFLRRKVREGRLKKKQIKFEKDLKRIWLKAGLKEAPENWQTPKIYLKNK.

This sequence belongs to the mitochondrion-specific ribosomal protein mS38 family. As to quaternary structure, component of the mitochondrial ribosome small subunit (28S) which comprises a 12S rRNA and about 30 distinct proteins. Interacts with Aurora-A. In terms of tissue distribution, ubiquitously expressed and especially highly expressed in heart, skeletal muscle and testis.

The protein localises to the mitochondrion matrix. It localises to the nucleus. In terms of biological role, may act as a negative regulator of Aurora-A kinase, by down-regulation through proteasome-dependent degradation. In Mus musculus (Mouse), this protein is Small ribosomal subunit protein mS38 (Aurkaip1).